The primary structure comprises 566 residues: Multidrug and toxin extrusion protein 1 (566 aa).

At M1 the chain carries N-acetylmethionine. A run of 13 helical transmembrane segments spans residues 37 to 57 (LLVL…ISFI), 72 to 92 (AVTL…HGLS), 120 to 140 (LILL…EQIL), 152 to 172 (LTQT…LYTL), 176 to 196 (YLLN…ANLV), 216 to 236 (ALAN…YILW), 257 to 276 (SFLQ…WWAY), 295 to 315 (SITY…SVAA), 336 to 356 (AISL…LLGC), 370 to 390 (IVAL…FEAL), 409 to 429 (IVNA…LMFV), 437 to 457 (LWSG…VFIA), and 543 to 563 (GLLF…RVYI).

Belongs to the multi antimicrobial extrusion (MATE) (TC 2.A.66.1) family. As to expression, highly expressed in kidney and placenta, moderately in stomach, colon, lung, spleen, skeletal muscle and prostate, and slightly in spleen. In the kidney, found in medulla and cortex, especially in the proximal convoluted and straight tubules. No expression was observed in heart, brain, small intestine and liver. Expressed in Sertoli cells in testis.

The protein localises to the cell membrane. The protein resides in the apical cell membrane. The catalysed reaction is thiamine(out) + H(+)(in) = thiamine(in) + H(+)(out). The enzyme catalyses estrone 3-sulfate(in) + H(+)(out) = estrone 3-sulfate(out) + H(+)(in). It catalyses the reaction creatinine(in) + H(+)(out) = creatinine(out) + H(+)(in). It carries out the reaction agmatine(in) + H(+)(out) = agmatine(out) + H(+)(in). Its function is as follows. Multidrug efflux pump that functions as a H(+)/organic cation antiporter. Plays a physiological role in the excretion of cationic compounds including endogenous metabolites, drugs, toxins through the kidney and liver, into urine and bile respectively. Mediates the efflux of endogenous compounds such as creatinine, vitamin B1/thiamine, agmatine and estrone-3-sulfate. May also contribute to regulate the transport of cationic compounds in testis across the blood-testis-barrier. The protein is Multidrug and toxin extrusion protein 1 (Slc47a1) of Rattus norvegicus (Rat).